A 354-amino-acid polypeptide reads, in one-letter code: Uroporphyrinogen decarboxylase (354 aa).

Substrate-binding positions include 27–31, D77, Y154, S209, and H327; that span reads RQAGR.

It belongs to the uroporphyrinogen decarboxylase family. As to quaternary structure, homodimer.

It localises to the cytoplasm. The enzyme catalyses uroporphyrinogen III + 4 H(+) = coproporphyrinogen III + 4 CO2. It functions in the pathway porphyrin-containing compound metabolism; protoporphyrin-IX biosynthesis; coproporphyrinogen-III from 5-aminolevulinate: step 4/4. Catalyzes the decarboxylation of four acetate groups of uroporphyrinogen-III to yield coproporphyrinogen-III. The sequence is that of Uroporphyrinogen decarboxylase from Saccharophagus degradans (strain 2-40 / ATCC 43961 / DSM 17024).